A 345-amino-acid polypeptide reads, in one-letter code: 2-oxoglutarate and iron-dependent oxygenase domain-containing protein 2 (345 aa).

A Fe2OG dioxygenase domain is found at 207 to 301; sequence DSHKAFVVKY…RWNLIIWMRA (95 aa). Positions 227, 229, and 282 each coordinate Fe cation. Arg292 is a binding site for 2-oxoglutarate.

Belongs to the OGFOD2 family. Fe(2+) is required as a cofactor. The cofactor is L-ascorbate.

The sequence is that of 2-oxoglutarate and iron-dependent oxygenase domain-containing protein 2 (ogfod2) from Danio rerio (Zebrafish).